The chain runs to 297 residues: tRNA dimethylallyltransferase (297 aa).

Position 10-17 (10-17 (GITASGKS)) interacts with ATP. 12 to 17 (TASGKS) lines the substrate pocket. Positions 36–39 (DSKQ) are interaction with substrate tRNA.

This sequence belongs to the IPP transferase family. In terms of assembly, monomer. Requires Mg(2+) as cofactor.

It catalyses the reaction adenosine(37) in tRNA + dimethylallyl diphosphate = N(6)-dimethylallyladenosine(37) in tRNA + diphosphate. Functionally, catalyzes the transfer of a dimethylallyl group onto the adenine at position 37 in tRNAs that read codons beginning with uridine, leading to the formation of N6-(dimethylallyl)adenosine (i(6)A). The sequence is that of tRNA dimethylallyltransferase from Wolbachia sp. subsp. Brugia malayi (strain TRS).